The primary structure comprises 282 residues: MYTTQDIAAIRTQVRQWKRAGETVAFVPTMGNLHQGHITLVTEALKRADHVVVSIFVNPMQFGQNEDLDAYPRTLAADQAALEAAGAELLFTPTPAIIYPKGMDKQTFVEVPGLSEELCGASRPGHFRGVATIVCKLFNIVQPDVALFGKKDFQQLMVIKAMVEDLSLPIEIVGVDTIRESSGLAMSSRNGYLSEAQKQQAAQLKRTLDEMAEAIAKGQAIPNVVRHAQEQLHQAGFKPDYLSVRNAADLREAQDSDKQLVILAAAFMGSTRLIDNLSFERA.

ATP is bound at residue 30 to 37 (MGNLHQGH). The active-site Proton donor is His37. Gln61 is a (R)-pantoate binding site. Gln61 contacts beta-alanine. 149–152 (GKKD) contributes to the ATP binding site. Gln155 is a binding site for (R)-pantoate. ATP-binding positions include Ile178 and 186–189 (MSSR).

It belongs to the pantothenate synthetase family. As to quaternary structure, homodimer.

It is found in the cytoplasm. It carries out the reaction (R)-pantoate + beta-alanine + ATP = (R)-pantothenate + AMP + diphosphate + H(+). It participates in cofactor biosynthesis; (R)-pantothenate biosynthesis; (R)-pantothenate from (R)-pantoate and beta-alanine: step 1/1. In terms of biological role, catalyzes the condensation of pantoate with beta-alanine in an ATP-dependent reaction via a pantoyl-adenylate intermediate. The chain is Pantothenate synthetase from Shewanella loihica (strain ATCC BAA-1088 / PV-4).